The sequence spans 93 residues: Small ribosomal subunit protein uS17 (93 aa).

The protein belongs to the universal ribosomal protein uS17 family. As to quaternary structure, part of the 30S ribosomal subunit.

Functionally, one of the primary rRNA binding proteins, it binds specifically to the 5'-end of 16S ribosomal RNA. The protein is Small ribosomal subunit protein uS17 of Rhodococcus erythropolis (strain PR4 / NBRC 100887).